A 220-amino-acid chain; its full sequence is Probable GTP-binding protein EngB (220 aa).

One can recognise an EngB-type G domain in the interval E26–P200. Residues G34–S41, G61–L65, D79–G82, T146–D149, and F179–S181 contribute to the GTP site. Residues S41 and T63 each coordinate Mg(2+).

Belongs to the TRAFAC class TrmE-Era-EngA-EngB-Septin-like GTPase superfamily. EngB GTPase family. Mg(2+) is required as a cofactor.

Its function is as follows. Necessary for normal cell division and for the maintenance of normal septation. This Vibrio cholerae serotype O1 (strain ATCC 39315 / El Tor Inaba N16961) protein is Probable GTP-binding protein EngB.